The chain runs to 595 residues: Solute carrier family 13 member 1 (595 aa).

A run of 5 helical transmembrane segments spans residues 13-33 (FLFVVFTVLVLLPLPIVLHTK), 41-61 (LFVVATFWLTEALPLSVTALL), 77-97 (VASAYFKDFHLLLIGVICLAT), 108-128 (IALKMVMMVGVNPAWLTLGFM), and 131-151 (TAFLSMWLSNTSTAAMVMPIA). N-linked (GlcNAc...) asparagine glycosylation is found at asparagine 174 and asparagine 207. 8 helical membrane-spanning segments follow: residues 239–259 (LTCLCIAYSSTIGGLTTITGT), 290–310 (PAALIILLLSWIWLQWLFLGF), 348–368 (IVTLVLFIIMALLWFSRDPGF), 381–401 (GFATDSTVALLIGLLFFLIPA), 464–484 (PLGSLPAWLIILISSLMVTSL), 491–511 (PATITLFLPILSPLAEAIHVN), 512–532 (PLYILIPSTLCTSFAFLLPVA), and 554–574 (GLGVNIVGVAVVMLGICTWIV). Asparagine 591 is a glycosylation site (N-linked (GlcNAc...) asparagine).

Belongs to the SLC13A/DASS transporter (TC 2.A.47) family. NADC subfamily. As to expression, highly expressed in kidney; not detectable in the other tissues tested.

It is found in the apical cell membrane. The catalysed reaction is sulfate(out) + 3 Na(+)(out) = sulfate(in) + 3 Na(+)(in). It carries out the reaction selenate(out) + 3 Na(+)(out) = selenate(in) + 3 Na(+)(in). The enzyme catalyses thiosulfate(out) + 3 Na(+)(out) = thiosulfate(in) + 3 Na(+)(in). Its activity is regulated as follows. Inhibited by thiosulfate, selenate, molybdate, tungstate, citrate and succinate. Functionally, sodium:sulfate symporter that mediates sulfate reabsorption in the kidney and small intestine. Can also mediate the transport of selenate and thiosulfate. The chain is Solute carrier family 13 member 1 (SLC13A1) from Homo sapiens (Human).